The primary structure comprises 231 residues: 7-cyano-7-deazaguanine synthase (231 aa).

8–18 provides a ligand contact to ATP; that stretch reads FSGGQDSTTCL. Zn(2+)-binding residues include cysteine 188, cysteine 197, cysteine 200, and cysteine 203.

Belongs to the QueC family. Zn(2+) is required as a cofactor.

The catalysed reaction is 7-carboxy-7-deazaguanine + NH4(+) + ATP = 7-cyano-7-deazaguanine + ADP + phosphate + H2O + H(+). It functions in the pathway purine metabolism; 7-cyano-7-deazaguanine biosynthesis. Functionally, catalyzes the ATP-dependent conversion of 7-carboxy-7-deazaguanine (CDG) to 7-cyano-7-deazaguanine (preQ(0)). In Salmonella paratyphi B (strain ATCC BAA-1250 / SPB7), this protein is 7-cyano-7-deazaguanine synthase.